The sequence spans 212 residues: Leucine efflux protein (212 aa).

A run of 6 helical transmembrane segments spans residues 12-32, 49-69, 71-91, 122-142, 153-173, and 188-208; these read TYLVGAIFIVLVPGPNTLFVL, GVFIGDAVLMFLAWAGMATLI, TTPILFNIVRYLGAFYLLYLG, ILSLTNPKAILFYVSFFVQFI, FFILATTLELVSFCYLSFLII, and LAKVGNSLIGLMFVGFAARLA.

This sequence belongs to the Rht family.

Its subcellular location is the cell inner membrane. It carries out the reaction L-leucine(in) + H(+)(out) = L-leucine(out) + H(+)(in). Its function is as follows. Exporter of leucine. The chain is Leucine efflux protein (leuE) from Escherichia coli O157:H7.